The chain runs to 207 residues: Tetrathionate reductase subunit B (207 aa).

A signal peptide spans 1 to 28 (MLISKTLIFYQVVNIVSQKGSGKRRWKM). 3 4Fe-4S ferredoxin-type domains span residues 34–63 (YVYV…PVGY), 75–106 (GRVA…KTEE), and 107–136 (GLVL…RNPV). Residues cysteine 43, cysteine 46, cysteine 49, cysteine 53, cysteine 84, cysteine 87, cysteine 92, cysteine 96, cysteine 116, cysteine 119, cysteine 122, cysteine 126, cysteine 143, cysteine 146, cysteine 157, and cysteine 161 each coordinate [4Fe-4S] cluster.

Probably composed of three subunits: TtrA, TtrB and TtrC.

Its subcellular location is the cell membrane. Functionally, part of a membrane-bound tetrathionate reductase that catalyzes the reduction of tetrathionate to thiosulfate. TtrB is probably involved in transfer of electrons from TtrC to TtrA. The protein is Tetrathionate reductase subunit B (ttrB) of Archaeoglobus fulgidus (strain ATCC 49558 / DSM 4304 / JCM 9628 / NBRC 100126 / VC-16).